A 327-amino-acid chain; its full sequence is GTPase Obg (327 aa).

Residues 1-159 (MQFIDQANII…WEVQLELKLL (159 aa)) enclose the Obg domain. The 168-residue stretch at 160-327 (AEVGIIGLPN…SLLSEVWKRI (168 aa)) folds into the OBG-type G domain. ATP-binding positions include 166–173 (GLPNAGKS), 191–195 (FTTLI), 213–216 (DIPG), 280–283 (NKIE), and 309–311 (SSS). Mg(2+) contacts are provided by Ser-173 and Thr-193.

This sequence belongs to the TRAFAC class OBG-HflX-like GTPase superfamily. OBG GTPase family. In terms of assembly, monomer. Mg(2+) serves as cofactor.

It localises to the cytoplasm. In terms of biological role, an essential GTPase which binds GTP, GDP and possibly (p)ppGpp with moderate affinity, with high nucleotide exchange rates and a fairly low GTP hydrolysis rate. Plays a role in control of the cell cycle, stress response, ribosome biogenesis and in those bacteria that undergo differentiation, in morphogenesis control. The polypeptide is GTPase Obg (Prochlorococcus marinus (strain AS9601)).